A 284-amino-acid polypeptide reads, in one-letter code: Bifunctional protein FolD (284 aa).

NADP(+) is bound by residues 165–167 (GRS), Ser-190, and Ile-231.

This sequence belongs to the tetrahydrofolate dehydrogenase/cyclohydrolase family. Homodimer.

The enzyme catalyses (6R)-5,10-methylene-5,6,7,8-tetrahydrofolate + NADP(+) = (6R)-5,10-methenyltetrahydrofolate + NADPH. It carries out the reaction (6R)-5,10-methenyltetrahydrofolate + H2O = (6R)-10-formyltetrahydrofolate + H(+). Its pathway is one-carbon metabolism; tetrahydrofolate interconversion. In terms of biological role, catalyzes the oxidation of 5,10-methylenetetrahydrofolate to 5,10-methenyltetrahydrofolate and then the hydrolysis of 5,10-methenyltetrahydrofolate to 10-formyltetrahydrofolate. This chain is Bifunctional protein FolD, found in Lysinibacillus sphaericus (strain C3-41).